Consider the following 972-residue polypeptide: Translation initiation factor IF-2 (972 aa).

The segment covering 48–63 (DHLRKSHGATDGDKRK) has biased composition (basic and acidic residues). Disordered stretches follow at residues 48-85 (DHLRKSHGATDGDKRKITLTRKHTSEIKQSDATGKART) and 99-385 (RDDV…QAPT). Residues 105 to 114 (GAEQGQAQVA) are compositionally biased toward low complexity. Residues 121-181 (ELKRREEEAR…EEEAAAKRVA (61 aa)) show a composition bias toward basic and acidic residues. A compositionally biased stretch (low complexity) spans 182–205 (AEAAAAQQQAAAQQAAAAEQQEAA). Positions 212-263 (DEARAAAERAAQREAAKKAEDAAREAADKARAEQEEISKRRAAAEAEARAIR) are enriched in basic and acidic residues. Pro residues predominate over residues 279-288 (PPKPVEPPKP). Residues 313–328 (PAGAAAPATTAPAGAG) are compositionally biased toward low complexity. Residues 357-370 (SSGGVDRGWRGGPK) are compositionally biased toward gly residues. The tr-type G domain maps to 472 to 641 (PRPPVVTVMG…LLQAEVLELK (170 aa)). Residues 481–488 (GHVDHGKT) form a G1 region. A GTP-binding site is contributed by 481–488 (GHVDHGKT). The G2 stretch occupies residues 506 to 510 (GITQH). The segment at 527–530 (DTPG) is G3. Residues 527-531 (DTPGH) and 581-584 (NKID) each bind GTP. Residues 581-584 (NKID) form a G4 region. Residues 617 to 619 (SAK) form a G5 region.

Belongs to the TRAFAC class translation factor GTPase superfamily. Classic translation factor GTPase family. IF-2 subfamily.

It localises to the cytoplasm. One of the essential components for the initiation of protein synthesis. Protects formylmethionyl-tRNA from spontaneous hydrolysis and promotes its binding to the 30S ribosomal subunits. Also involved in the hydrolysis of GTP during the formation of the 70S ribosomal complex. The protein is Translation initiation factor IF-2 of Burkholderia lata (strain ATCC 17760 / DSM 23089 / LMG 22485 / NCIMB 9086 / R18194 / 383).